A 402-amino-acid polypeptide reads, in one-letter code: uncharacterized protein (402 aa).

Transmembrane regions (helical) follow at residues 12–32 (FWLITGIIFIAFNLRPAITSV), 48–68 (GAAGFLTALPLLSFAVLSPLA), 80–100 (TLWLGLVILLIGVLTRSTGYT), 101–121 (AALFFGTALIGVGIAIGNVLL), 134–154 (GIMISLYTTSMNIFAALASGV), 168–188 (QAFLLWGGLALLALLIWIPQL), 212–232 (WYVTIFMGLQSFLFYSSIAWF), 248–268 (WMVSLMQFASLPSTFLTPVLA), 291–311 (GLLAGGSHTLLAIWMIIIGIG), 339–359 (MSQSFGYLLAAVGPIFVGYLF), and 367–387 (MPIVLLIAALIVMGAAGQGAG).

Belongs to the major facilitator superfamily. Cyanate porter (TC 2.A.1.17) family.

The protein localises to the cell membrane. This is an uncharacterized protein from Bacillus subtilis (strain 168).